The chain runs to 287 residues: Putative ankyrin repeat protein R791 (287 aa).

ANK repeat units lie at residues 40–71, 76–105, 107–134, 135–164, 165–194, 196–224, and 225–254; these read HNFN…PLVF, NVHD…NIET, NDDV…IDNK, TIFE…DIKA, KDNF…TIDI, DDTY…DYRT, and VDDL…DIEA.

This is Putative ankyrin repeat protein R791 from Acanthamoeba polyphaga (Amoeba).